Consider the following 764-residue polypeptide: PFL-like enzyme TdcE (764 aa).

One can recognise a PFL domain in the interval 7–629 (TSDKLYADAW…KTGNTPDGRR (623 aa)). Cysteine 423 serves as the catalytic S-acetylcysteine intermediate. Cysteine 424 acts as the Cysteine radical intermediate in catalysis. Residues 622-645 (GNTPDGRRAGTPFAPGANPMHGRD) form a disordered region. The 129-residue stretch at 636-764 (PGANPMHGRD…VISRTFTQAL (129 aa)) folds into the Glycine radical domain. Glycine 739 carries the glycine radical modification.

It belongs to the glycyl radical enzyme (GRE) family. PFL subfamily.

The protein localises to the cytoplasm. It catalyses the reaction 2-oxobutanoate + CoA = propanoyl-CoA + formate. The enzyme catalyses formate + acetyl-CoA = pyruvate + CoA. It participates in amino-acid degradation; L-threonine degradation via propanoate pathway; propanoate from L-threonine: step 2/4. Its activity is regulated as follows. Dependent on PFL-activase. Functionally, catalyzes the cleavage of 2-ketobutyrate to propionyl-CoA and formate. It can also use pyruvate as substrate. The chain is PFL-like enzyme TdcE (tdcE) from Escherichia coli (strain K12).